A 337-amino-acid polypeptide reads, in one-letter code: Glyceraldehyde-3-phosphate dehydrogenase (337 aa).

NAD(+) is bound by residues 12–13 (RI), aspartate 34, and lysine 79. D-glyceraldehyde 3-phosphate-binding positions include 150–152 (SCT), threonine 181, 210–211 (TG), and arginine 233. Residue cysteine 151 is the Nucleophile of the active site. Residue asparagine 315 participates in NAD(+) binding.

Belongs to the glyceraldehyde-3-phosphate dehydrogenase family. In terms of assembly, homotetramer. In terms of tissue distribution, expressed in all tissues examined.

The protein localises to the cytoplasm. The catalysed reaction is D-glyceraldehyde 3-phosphate + phosphate + NAD(+) = (2R)-3-phospho-glyceroyl phosphate + NADH + H(+). It participates in carbohydrate degradation; glycolysis; pyruvate from D-glyceraldehyde 3-phosphate: step 1/5. The protein is Glyceraldehyde-3-phosphate dehydrogenase (gpd) of Lentinula edodes (Shiitake mushroom).